The primary structure comprises 431 residues: UDP-N-acetylglucosamine 1-carboxyvinyltransferase (431 aa).

22 to 23 (KN) contacts phosphoenolpyruvate. Arg102 serves as a coordination point for UDP-N-acetyl-alpha-D-glucosamine. The Proton donor role is filled by Cys126. 2-(S-cysteinyl)pyruvic acid O-phosphothioketal is present on Cys126. UDP-N-acetyl-alpha-D-glucosamine is bound by residues 131–135 (RPVDL), Asp316, and Ile338.

This sequence belongs to the EPSP synthase family. MurA subfamily.

The protein localises to the cytoplasm. The catalysed reaction is phosphoenolpyruvate + UDP-N-acetyl-alpha-D-glucosamine = UDP-N-acetyl-3-O-(1-carboxyvinyl)-alpha-D-glucosamine + phosphate. It participates in cell wall biogenesis; peptidoglycan biosynthesis. Functionally, cell wall formation. Adds enolpyruvyl to UDP-N-acetylglucosamine. The protein is UDP-N-acetylglucosamine 1-carboxyvinyltransferase of Beijerinckia indica subsp. indica (strain ATCC 9039 / DSM 1715 / NCIMB 8712).